Here is a 168-residue protein sequence, read N- to C-terminus: Urease accessory protein UreE (168 aa).

A disordered region spans residues 145–168 (EGGAYAAGQGGGHGPHGQHTHPHH).

The protein belongs to the UreE family.

It localises to the cytoplasm. In terms of biological role, involved in urease metallocenter assembly. Binds nickel. Probably functions as a nickel donor during metallocenter assembly. This is Urease accessory protein UreE from Verminephrobacter eiseniae (strain EF01-2).